The following is a 478-amino-acid chain: Membrane-bound lytic murein transglycosylase F (478 aa).

An N-terminal signal peptide occupies residues Met1–Val22. The non-LT domain stretch occupies residues Glu23–Val257. The LT domain stretch occupies residues Lys258–Lys478. Glu302 is an active-site residue. Residues Ser446–Lys478 are disordered. Residues Ser451–Ser461 are compositionally biased toward acidic residues.

It in the N-terminal section; belongs to the bacterial solute-binding protein 3 family. In the C-terminal section; belongs to the transglycosylase Slt family.

Its subcellular location is the cell outer membrane. It catalyses the reaction Exolytic cleavage of the (1-&gt;4)-beta-glycosidic linkage between N-acetylmuramic acid (MurNAc) and N-acetylglucosamine (GlcNAc) residues in peptidoglycan, from either the reducing or the non-reducing ends of the peptidoglycan chains, with concomitant formation of a 1,6-anhydrobond in the MurNAc residue.. Functionally, murein-degrading enzyme that degrades murein glycan strands and insoluble, high-molecular weight murein sacculi, with the concomitant formation of a 1,6-anhydromuramoyl product. Lytic transglycosylases (LTs) play an integral role in the metabolism of the peptidoglycan (PG) sacculus. Their lytic action creates space within the PG sacculus to allow for its expansion as well as for the insertion of various structures such as secretion systems and flagella. The sequence is that of Membrane-bound lytic murein transglycosylase F from Shewanella sp. (strain ANA-3).